We begin with the raw amino-acid sequence, 731 residues long: Bifunctional trehalose-6-phosphate synthase/phosphatase (731 aa).

Positions 1–464 (MRLIVVSNRL…WGTDFIYSLI (464 aa)) are alpha,alpha-trehalose-phosphate synthase. Arg9 is a binding site for D-glucose 6-phosphate. UDP-alpha-D-glucose is bound at residue 25 to 26 (GG). 2 residues coordinate D-glucose 6-phosphate: Tyr89 and Asp143. Positions 276 and 281 each coordinate UDP-alpha-D-glucose. Residue Arg314 participates in D-glucose 6-phosphate binding. 379-383 (LVAKE) lines the UDP-alpha-D-glucose pocket. Positions 465–731 (SAKSAREEVE…RSLLEQLRPP (267 aa)) are trehalose-6-phosphate phosphatase. The active-site Nucleophile is the Asp503. The Mg(2+) site is built by Asp503, Asp505, and Asp684. 503–505 (DYD) is an alpha,alpha-trehalose 6-phosphate binding site.

In the N-terminal section; belongs to the glycosyltransferase 20 family. It in the C-terminal section; belongs to the trehalose phosphatase family. In terms of assembly, may interact with the putative glycosyltransferase (GT) TTX_1305. TTX_1305 is required for the trehalose-6-phosphate synthase activity of tpsp. Requires Mg(2+) as cofactor.

It catalyses the reaction D-glucose 6-phosphate + UDP-alpha-D-glucose = alpha,alpha-trehalose 6-phosphate + UDP + H(+). The enzyme catalyses alpha,alpha-trehalose 6-phosphate + H2O = alpha,alpha-trehalose + phosphate. The protein operates within glycan biosynthesis; trehalose biosynthesis. Bifunctional enzyme which catalyzes the transfer of glucose from UDP-alpha-D-glucose to glucose-6-phosphate to form trehalose-6-phosphate (Tre6P) and removes the phosphate from Tre6P to produce free trehalose. The chain is Bifunctional trehalose-6-phosphate synthase/phosphatase from Thermoproteus tenax (strain ATCC 35583 / DSM 2078 / JCM 9277 / NBRC 100435 / Kra 1).